Consider the following 1468-residue polypeptide: DNA polymerase alpha catalytic subunit A (1468 aa).

The span at 1 to 12 (MSSKSEKLEKLR) shows a compositional bias: basic and acidic residues. Disordered regions lie at residues 1–34 (MSSKSEKLEKLRKLQAARNGTSIDDYEGDESDGD), 71–135 (GVEE…KKSI), and 166–205 (NLNSSPTSEFKSSIKRVNGNDESSHDAGISKKVKIDPDSS). S2 is subject to N-acetylserine. At S31 the chain carries Phosphoserine. Residues 71 to 80 (GVEEDWREVD) are compositionally biased toward basic and acidic residues. Phosphoserine is present on residues S82, S83, S84, S169, and S170. The span at 166–176 (NLNSSPTSEFK) shows a compositional bias: polar residues. T172 carries the phosphothreonine modification. Over residues 183–205 (NGNDESSHDAGISKKVKIDPDSS) the composition is skewed to basic and acidic residues. S240 and S274 each carry phosphoserine. The interval 256 to 275 (LANPPSAQSLADEEDDEDSD) is disordered. The segment covering 266 to 275 (ADEEDDEDSD) has biased composition (acidic residues). 2 positions are modified to phosphothreonine: T309 and T313. Residues 813 to 837 (PDKEGNRSRAQKQRQNEENADAPVN) are disordered. The interval 1246–1381 (KKYFRREGGN…CTGVMRYKYS (136 aa)) is DNA-binding. Zn(2+)-binding residues include C1287, C1290, C1314, C1317, C1348, C1353, C1367, and C1372. The CysA-type zinc finger occupies 1287–1317 (CPSCDKRFPFGGIVSSNYYRVSYNGLQCKHC). The CysB motif motif lies at 1348–1372 (CDDSTCGIVTRQVSVFGKRCLNDGC).

Belongs to the DNA polymerase type-B family. DNA polymerase alpha:primase is a four subunit enzyme complex, which is assembled throughout the cell cycle, and consists of the two DNA polymerase subunits A POL1 and B POL12, and the DNA primase large PRI2 and small PRI1 subunits. Subunit B POL12 binds to subunit A POL1. POL1 interacts with CDC13, POB3, SPT16 and MCM10.

The protein localises to the nucleus. The enzyme catalyses DNA(n) + a 2'-deoxyribonucleoside 5'-triphosphate = DNA(n+1) + diphosphate. Functionally, catalytic component of DNA polymerase alpha, which in complex with DNA primase (DNA polymerase alpha:primase) constitutes a replicative polymerase. POL1 has a role in promoting telomere replication during interaction with CDC13. This chain is DNA polymerase alpha catalytic subunit A (POL1), found in Saccharomyces cerevisiae (strain ATCC 204508 / S288c) (Baker's yeast).